The following is a 261-amino-acid chain: Phosphate import ATP-binding protein PstB 4 (261 aa).

The 249-residue stretch at 8-256 folds into the ABC transporter domain; sequence IKVNNLSFYY…PHDSRTREYV (249 aa). 40–47 provides a ligand contact to ATP; that stretch reads GPSGCGKS.

This sequence belongs to the ABC transporter superfamily. Phosphate importer (TC 3.A.1.7) family. In terms of assembly, the complex is composed of two ATP-binding proteins (PstB), two transmembrane proteins (PstC and PstA) and a solute-binding protein (PstS).

The protein localises to the cell inner membrane. It catalyses the reaction phosphate(out) + ATP + H2O = ADP + 2 phosphate(in) + H(+). Functionally, part of the ABC transporter complex PstSACB involved in phosphate import. Responsible for energy coupling to the transport system. In Trichormus variabilis (strain ATCC 29413 / PCC 7937) (Anabaena variabilis), this protein is Phosphate import ATP-binding protein PstB 4.